Consider the following 559-residue polypeptide: Spermidine/putrescine import ATP-binding protein PotA (559 aa).

The ABC transporter domain maps to 7-448 (IEIEGLNKTF…PKTEWIANFI (442 aa)). 40 to 47 (GPSGCGKT) lines the ATP pocket. The insert stretch occupies residues 108–317 (WTKLDEIPKL…EAFEKRYLSR (210 aa)).

The protein belongs to the ABC transporter superfamily. Spermidine/putrescine importer (TC 3.A.1.11.1) family. As to quaternary structure, the complex is composed of two ATP-binding proteins (PotA), two transmembrane proteins (PotB and PotC) and a solute-binding protein (PotD).

Its subcellular location is the cell membrane. It catalyses the reaction ATP + H2O + polyamine-[polyamine-binding protein]Side 1 = ADP + phosphate + polyamineSide 2 + [polyamine-binding protein]Side 1.. Functionally, part of the ABC transporter complex PotABCD involved in spermidine/putrescine import. Responsible for energy coupling to the transport system. The polypeptide is Spermidine/putrescine import ATP-binding protein PotA (Mycoplasma genitalium (strain ATCC 33530 / DSM 19775 / NCTC 10195 / G37) (Mycoplasmoides genitalium)).